The sequence spans 135 residues: Small ribosomal subunit protein uS11 (135 aa).

Over residues 1 to 11 (MPPKARAGAAV) the composition is skewed to low complexity. Residues 1–22 (MPPKARAGAAVKKVRRKERKNV) form a disordered region.

It belongs to the universal ribosomal protein uS11 family. Part of the 30S ribosomal subunit. Interacts with proteins S7 and S18. Binds to IF-3.

Located on the platform of the 30S subunit, it bridges several disparate RNA helices of the 16S rRNA. Forms part of the Shine-Dalgarno cleft in the 70S ribosome. This chain is Small ribosomal subunit protein uS11, found in Salinispora tropica (strain ATCC BAA-916 / DSM 44818 / JCM 13857 / NBRC 105044 / CNB-440).